The following is a 165-amino-acid chain: MSLDSENTISENNDVRINNINLIASIVLWLLFVITVIGTFKPIHRVSMESNFSKYYKYTYCVDDKCTCVDYFTYGKVTIYCYNKNSVNCLAINWDNVGIIVILIFMLMIIMNGFYQMMKQKISVEDLVIMNQQLEYQRQNRMNNLYYHDNYGNLRMRMPGDYGYY.

Residues 20-40 (INLIASIVLWLLFVITVIGTF) form a helical membrane-spanning segment. Asn51 carries an N-linked (GlcNAc...) asparagine; by host glycan. The chain crosses the membrane as a helical span at residues 97 to 117 (VGIIVILIFMLMIIMNGFYQM).

It is found in the membrane. This is an uncharacterized protein from Acanthamoeba polyphaga (Amoeba).